The following is a 1021-amino-acid chain: MGVLRVYVILILVGFCVQIVVVNSQNLTCNSNDLKALEGFMRGLESSIDGWKWNESSSFSSNCCDWVGISCKSSVSLGLDDVNESGRVVELELGRRKLSGKLSESVAKLDQLKVLNLTHNSLSGSIAASLLNLSNLEVLDLSSNDFSGLFPSLINLPSLRVLNVYENSFHGLIPASLCNNLPRIREIDLAMNYFDGSIPVGIGNCSSVEYLGLASNNLSGSIPQELFQLSNLSVLALQNNRLSGALSSKLGKLSNLGRLDISSNKFSGKIPDVFLELNKLWYFSAQSNLFNGEMPRSLSNSRSISLLSLRNNTLSGQIYLNCSAMTNLTSLDLASNSFSGSIPSNLPNCLRLKTINFAKIKFIAQIPESFKNFQSLTSLSFSNSSIQNISSALEILQHCQNLKTLVLTLNFQKEELPSVPSLQFKNLKVLIIASCQLRGTVPQWLSNSPSLQLLDLSWNQLSGTIPPWLGSLNSLFYLDLSNNTFIGEIPHSLTSLQSLVSKENAVEEPSPDFPFFKKKNTNAGGLQYNQPSSFPPMIDLSYNSLNGSIWPEFGDLRQLHVLNLKNNNLSGNIPANLSGMTSLEVLDLSHNNLSGNIPPSLVKLSFLSTFSVAYNKLSGPIPTGVQFQTFPNSSFEGNQGLCGEHASPCHITDQSPHGSAVKSKKNIRKIVAVAVGTGLGTVFLLTVTLLIILRTTSRGEVDPEKKADADEIELGSRSVVLFHNKDSNNELSLDDILKSTSSFNQANIIGCGGFGLVYKATLPDGTKVAIKRLSGDTGQMDREFQAEVETLSRAQHPNLVHLLGYCNYKNDKLLIYSYMDNGSLDYWLHEKVDGPPSLDWKTRLRIARGAAEGLAYLHQSCEPHILHRDIKSSNILLSDTFVAHLADFGLARLILPYDTHVTTDLVGTLGYIPPEYGQASVATYKGDVYSFGVVLLELLTGRRPMDVCKPRGSRDLISWVLQMKTEKRESEIFDPFIYDKDHAEEMLLVLEIACRCLGENPKTRPTTQQLVSWLENIDVSS.

The signal sequence occupies residues 1–24 (MGVLRVYVILILVGFCVQIVVVNS). Residues 21-43 (VVNSQNLTCNSNDLKALEGFMRG) form an LRR 1 repeat. N-linked (GlcNAc...) asparagine glycosylation is found at asparagine 26, asparagine 54, and asparagine 83. LRR repeat units lie at residues 85-109 (SGRV…VAKL), 110-133 (DQLK…LLNL), 135-156 (NLEV…LINL), 158-180 (SLRV…LCNN), 181-205 (LPRI…IGNC), 206-229 (SSVE…LFQL), 231-252 (NLSV…KLGK), 253-277 (LSNL…FLEL), 301-325 (SRSI…CSAM), 326-349 (TNLT…LPNC), 351-372 (RLKT…SFKN), 373-397 (FQSL…EILQ), 402-426 (LKTL…QFKN), 428-448 (KVLI…LSNS), 449-474 (PSLQ…SLNS), and 476-496 (FYLD…LTSL). 2 N-linked (GlcNAc...) asparagine glycosylation sites follow: asparagine 116 and asparagine 132. 3 N-linked (GlcNAc...) asparagine glycosylation sites follow: asparagine 204, asparagine 217, and asparagine 231. N-linked (GlcNAc...) asparagine glycans are attached at residues asparagine 311, asparagine 321, and asparagine 327. N-linked (GlcNAc...) asparagine glycosylation is found at asparagine 383 and asparagine 388. Residues asparagine 482, asparagine 546, asparagine 568, asparagine 576, and asparagine 592 are each glycosylated (N-linked (GlcNAc...) asparagine). The LRR 18; atypical repeat unit spans residues 498-555 (SLVSKENAVEEPSPDFPFFKKKNTNAGGLQYNQPSSFPPMIDLSYNSLNGSIWPEFGD). LRR repeat units lie at residues 556–580 (LRQL…LSGM), 581–604 (TSLE…LVKL), and 606–629 (FLST…QFQT). N-linked (GlcNAc...) asparagine glycosylation occurs at asparagine 632. The chain crosses the membrane as a helical span at residues 673–693 (VAVGTGLGTVFLLTVTLLIIL). Residues 743 to 1014 (FNQANIIGCG…PTTQQLVSWL (272 aa)) enclose the Protein kinase domain. ATP contacts are provided by residues 749-757 (IGCGGFGLV) and lysine 771. The active-site Proton acceptor is the aspartate 869.

The protein belongs to the protein kinase superfamily. Ser/Thr protein kinase family. In terms of processing, N-glycosylated. Expressed ubiquitously in leaf, apical meristem, hypocotyl and root.

The protein resides in the cell membrane. The enzyme catalyses L-seryl-[protein] + ATP = O-phospho-L-seryl-[protein] + ADP + H(+). It carries out the reaction L-threonyl-[protein] + ATP = O-phospho-L-threonyl-[protein] + ADP + H(+). Its function is as follows. Phytosulfokine receptor with a serine/threonine-protein kinase activity. Regulates, in response to phytosulfokine binding, a signaling cascade involved in plant cell differentiation, organogenesis and somatic embryogenesis. This Daucus carota (Wild carrot) protein is Phytosulfokine receptor 1 (PSKR).